A 695-amino-acid chain; its full sequence is UvrABC system protein B (695 aa).

The Helicase ATP-binding domain occupies 31–414; that stretch reads EGIESGLSFQ…EIQRSGQIAE (384 aa). 44–51 provides a ligand contact to ATP; that stretch reads GVTGSGKT. The Beta-hairpin motif lies at 97–120; it reads YYDYYQPEAYVPSRDLFIEKDSSI. The 167-residue stretch at 435 to 601 folds into the Helicase C-terminal domain; that stretch reads QVDDLMSEVS…GVNKRIKDLI (167 aa). Residues 632-667 form the UVR domain; that stretch reads AKEIQRLEKSMLEAARNMEFEQAAQYRDEIKNLRSK.

This sequence belongs to the UvrB family. In terms of assembly, forms a heterotetramer with UvrA during the search for lesions. Interacts with UvrC in an incision complex.

Its subcellular location is the cytoplasm. In terms of biological role, the UvrABC repair system catalyzes the recognition and processing of DNA lesions. A damage recognition complex composed of 2 UvrA and 2 UvrB subunits scans DNA for abnormalities. Upon binding of the UvrA(2)B(2) complex to a putative damaged site, the DNA wraps around one UvrB monomer. DNA wrap is dependent on ATP binding by UvrB and probably causes local melting of the DNA helix, facilitating insertion of UvrB beta-hairpin between the DNA strands. Then UvrB probes one DNA strand for the presence of a lesion. If a lesion is found the UvrA subunits dissociate and the UvrB-DNA preincision complex is formed. This complex is subsequently bound by UvrC and the second UvrB is released. If no lesion is found, the DNA wraps around the other UvrB subunit that will check the other stand for damage. This Nitrosomonas europaea (strain ATCC 19718 / CIP 103999 / KCTC 2705 / NBRC 14298) protein is UvrABC system protein B.